Consider the following 670-residue polypeptide: tRNA 5-methylaminomethyl-2-thiouridine biosynthesis bifunctional protein MnmC (670 aa).

Residues 1 to 242 (MTFSVQHAEI…KRECLSGLKI (242 aa)) are tRNA (mnm(5)s(2)U34)-methyltransferase. The interval 269 to 670 (IGGGIASLCA…KKWLKGSKVE (402 aa)) is FAD-dependent cmnm(5)s(2)U34 oxidoreductase.

This sequence in the N-terminal section; belongs to the methyltransferase superfamily. tRNA (mnm(5)s(2)U34)-methyltransferase family. The protein in the C-terminal section; belongs to the DAO family. The cofactor is FAD.

The protein localises to the cytoplasm. It carries out the reaction 5-aminomethyl-2-thiouridine(34) in tRNA + S-adenosyl-L-methionine = 5-methylaminomethyl-2-thiouridine(34) in tRNA + S-adenosyl-L-homocysteine + H(+). Functionally, catalyzes the last two steps in the biosynthesis of 5-methylaminomethyl-2-thiouridine (mnm(5)s(2)U) at the wobble position (U34) in tRNA. Catalyzes the FAD-dependent demodification of cmnm(5)s(2)U34 to nm(5)s(2)U34, followed by the transfer of a methyl group from S-adenosyl-L-methionine to nm(5)s(2)U34, to form mnm(5)s(2)U34. The chain is tRNA 5-methylaminomethyl-2-thiouridine biosynthesis bifunctional protein MnmC from Haemophilus influenzae (strain ATCC 51907 / DSM 11121 / KW20 / Rd).